Here is a 368-residue protein sequence, read N- to C-terminus: Phosphoserine aminotransferase (368 aa).

Arginine 44 serves as a coordination point for L-glutamate. Pyridoxal 5'-phosphate is bound by residues alanine 78–threonine 79, tryptophan 104, threonine 157, aspartate 179, and glutamine 202. Lysine 203 is subject to N6-(pyridoxal phosphate)lysine. Asparagine 244–threonine 245 contacts pyridoxal 5'-phosphate.

The protein belongs to the class-V pyridoxal-phosphate-dependent aminotransferase family. SerC subfamily. Homodimer. It depends on pyridoxal 5'-phosphate as a cofactor.

Its subcellular location is the cytoplasm. The enzyme catalyses O-phospho-L-serine + 2-oxoglutarate = 3-phosphooxypyruvate + L-glutamate. The catalysed reaction is 4-(phosphooxy)-L-threonine + 2-oxoglutarate = (R)-3-hydroxy-2-oxo-4-phosphooxybutanoate + L-glutamate. It functions in the pathway amino-acid biosynthesis; L-serine biosynthesis; L-serine from 3-phospho-D-glycerate: step 2/3. It participates in cofactor biosynthesis; pyridoxine 5'-phosphate biosynthesis; pyridoxine 5'-phosphate from D-erythrose 4-phosphate: step 3/5. Its function is as follows. Catalyzes the reversible conversion of 3-phosphohydroxypyruvate to phosphoserine and of 3-hydroxy-2-oxo-4-phosphonooxybutanoate to phosphohydroxythreonine. The chain is Phosphoserine aminotransferase from Neisseria meningitidis serogroup B (strain ATCC BAA-335 / MC58).